The sequence spans 93 residues: MICAVYKSLRKAESYLFVEKRNDFERVPEALMAMFGEPKLVMMLPIEKRDHLGFADIKKVRSELKEKGFYLQLPPPVVNLLEQHKKEIGFNPD.

The YcgL domain maps to 1-85 (MICAVYKSLR…PVVNLLEQHK (85 aa)).

In Shewanella pealeana (strain ATCC 700345 / ANG-SQ1), this protein is YcgL domain-containing protein Spea_2443.